The sequence spans 295 residues: MADYLVRAIGAGGNVRAFAAVTTALTEEARRRHDTWPVATAALGRALTGTALLAATLKDPNESLTLRVAGDGPLRGILCDADEQGHVRGYVTEPHVDLEPAARGKLNVGAAVGTGMLYVTRQLALQGIYTGSSELVSGEIAEDLAYYLTRSEQTPSAVGLGVRVGPDGAVVAAGGYMVQLLPATPDADRDRLEENLGRLGSVSLAVEQGMTPEEILSVVLTGIDYQILERRDLSFPCRCSRERALGAIALLDETELSGLVEEGRGAELTCHFCNAVYRFSPEEVLQVQRGMKDKQ.

Disulfide bonds link Cys237-Cys239 and Cys270-Cys273.

This sequence belongs to the HSP33 family. Under oxidizing conditions two disulfide bonds are formed involving the reactive cysteines. Under reducing conditions zinc is bound to the reactive cysteines and the protein is inactive.

Its subcellular location is the cytoplasm. In terms of biological role, redox regulated molecular chaperone. Protects both thermally unfolding and oxidatively damaged proteins from irreversible aggregation. Plays an important role in the bacterial defense system toward oxidative stress. The sequence is that of 33 kDa chaperonin from Symbiobacterium thermophilum (strain DSM 24528 / JCM 14929 / IAM 14863 / T).